The following is a 422-amino-acid chain: MSDMFRKSVLNKLPHLPPTRAPWADESEPIEEIDEEDEQLDGIGEFKPATMGPSKHDTQDYSPLSASTFFAQAAEVQPPSTPCTFRVYLTPPNLSIASANAGTPPGPSGLRTQQQTNRHGTYLVCHHGGGASGLGFAPLAREVKAKGNGEMGVLAFDCRGHGKTSTSDPNLELDLSHDTLLSDFMAIIEMMFPDPKESPSLILLGHSMGAAPVVSAAPELQKKGYTIPGVVVLDVVEGTAVESLPLMKSVLSKRPESFRSVIDAIYWHVTSNSIRNVESARVSVPHIIVPAPSSSSSDPSANPGGKQVWRTNLVGTEPYWEGWYKGLSQRFLRTKCARLLVLAGQERLDRELMVGQMQGKFQLEVMSDVGHYLHEDNPAGLAATLITFWHRNTRVLVLPPKIGAPGPGARGGPVEVKQVGQQ.

The disordered stretch occupies residues 1–27; the sequence is MSDMFRKSVLNKLPHLPPTRAPWADES. Catalysis depends on residues Ser207, Asp234, and His371.

It belongs to the AB hydrolase superfamily.

It catalyses the reaction [phosphatase 2A protein]-C-terminal L-leucine methyl ester + H2O = [phosphatase 2A protein]-C-terminal L-leucine + methanol + H(+). Its function is as follows. Demethylates proteins that have been reversibly carboxymethylated. Demethylates the phosphatase PP2A catalytic subunit. This Cryptococcus neoformans var. neoformans serotype D (strain JEC21 / ATCC MYA-565) (Filobasidiella neoformans) protein is Protein phosphatase methylesterase 1 (PPE1).